The primary structure comprises 125 residues: Fluoride-specific ion channel FluC (125 aa).

The next 4 helical transmembrane spans lie at 6–26 (VLVM…GLGI), 35–55 (FLFG…GLFA), 66–86 (LLLL…ALSI), and 100–120 (AMGY…AGYL). Gly76 and Thr79 together coordinate Na(+).

The protein belongs to the fluoride channel Fluc/FEX (TC 1.A.43) family.

The protein resides in the cell inner membrane. It catalyses the reaction fluoride(in) = fluoride(out). Na(+) is not transported, but it plays an essential structural role and its presence is essential for fluoride channel function. Fluoride-specific ion channel. Important for reducing fluoride concentration in the cell, thus reducing its toxicity. In Gloeobacter violaceus (strain ATCC 29082 / PCC 7421), this protein is Fluoride-specific ion channel FluC.